We begin with the raw amino-acid sequence, 201 residues long: Holliday junction branch migration complex subunit RuvA (201 aa).

The tract at residues 1-64 (MYEYIRGQFQ…EDFIGLYGFT (64 aa)) is domain I. The interval 65–143 (TREELEMFKL…PDELTSEEGE (79 aa)) is domain II. Residues 144-152 (LIEGINDNS) are flexible linker. The domain III stretch occupies residues 153-201 (DYSFNINETLSALMALGYTEKEAQKALEKVDKTLSIENMIKESLKLLMR).

This sequence belongs to the RuvA family. As to quaternary structure, homotetramer. Forms an RuvA(8)-RuvB(12)-Holliday junction (HJ) complex. HJ DNA is sandwiched between 2 RuvA tetramers; dsDNA enters through RuvA and exits via RuvB. An RuvB hexamer assembles on each DNA strand where it exits the tetramer. Each RuvB hexamer is contacted by two RuvA subunits (via domain III) on 2 adjacent RuvB subunits; this complex drives branch migration. In the full resolvosome a probable DNA-RuvA(4)-RuvB(12)-RuvC(2) complex forms which resolves the HJ.

It localises to the cytoplasm. The RuvA-RuvB-RuvC complex processes Holliday junction (HJ) DNA during genetic recombination and DNA repair, while the RuvA-RuvB complex plays an important role in the rescue of blocked DNA replication forks via replication fork reversal (RFR). RuvA specifically binds to HJ cruciform DNA, conferring on it an open structure. The RuvB hexamer acts as an ATP-dependent pump, pulling dsDNA into and through the RuvAB complex. HJ branch migration allows RuvC to scan DNA until it finds its consensus sequence, where it cleaves and resolves the cruciform DNA. The protein is Holliday junction branch migration complex subunit RuvA of Clostridium perfringens (strain ATCC 13124 / DSM 756 / JCM 1290 / NCIMB 6125 / NCTC 8237 / Type A).